We begin with the raw amino-acid sequence, 239 residues long: MSSVFDIDSVVLDIEGTTSATGFVVDVLYPYSRSRFGALLTERSGDPEVARAVAQVRELLGEPDADAVRVEKALNEWLDDDRKATPLKTLQGLVWSEGFARGELVSHFYDDVVPALRAWHAAGVRLHVYSSGSVAAQRAWFRSSPEGDLLPLVEGLYDTENAGPKQEPESYRTIAAALGTGADRILFLSDRPGELDAARAAGWRTVGVRRPGEPYYEQGVGDHAQAGSFGGITIARSTA.

The protein belongs to the HAD-like hydrolase superfamily. MasA/MtnC family. In terms of assembly, monomer. Mg(2+) is required as a cofactor.

It catalyses the reaction 5-methylsulfanyl-2,3-dioxopentyl phosphate + H2O = 1,2-dihydroxy-5-(methylsulfanyl)pent-1-en-3-one + phosphate. Its pathway is amino-acid biosynthesis; L-methionine biosynthesis via salvage pathway; L-methionine from S-methyl-5-thio-alpha-D-ribose 1-phosphate: step 3/6. It participates in amino-acid biosynthesis; L-methionine biosynthesis via salvage pathway; L-methionine from S-methyl-5-thio-alpha-D-ribose 1-phosphate: step 4/6. In terms of biological role, bifunctional enzyme that catalyzes the enolization of 2,3-diketo-5-methylthiopentyl-1-phosphate (DK-MTP-1-P) into the intermediate 2-hydroxy-3-keto-5-methylthiopentenyl-1-phosphate (HK-MTPenyl-1-P), which is then dephosphorylated to form the acireductone 1,2-dihydroxy-3-keto-5-methylthiopentene (DHK-MTPene). The protein is Enolase-phosphatase E1 of Streptomyces avermitilis (strain ATCC 31267 / DSM 46492 / JCM 5070 / NBRC 14893 / NCIMB 12804 / NRRL 8165 / MA-4680).